Consider the following 157-residue polypeptide: DNA gyrase inhibitor (157 aa).

The protein belongs to the DNA gyrase inhibitor family. As to quaternary structure, interacts with DNA gyrase.

The protein localises to the cytoplasm. Functionally, inhibits the supercoiling activity of DNA gyrase. Acts by inhibiting DNA gyrase at an early step, prior to (or at the step of) binding of DNA by the gyrase. It protects cells against toxins that target DNA gyrase, by inhibiting activity of these toxins and reducing the formation of lethal double-strand breaks in the cell. This is DNA gyrase inhibitor from Cronobacter turicensis (strain DSM 18703 / CCUG 55852 / LMG 23827 / z3032).